We begin with the raw amino-acid sequence, 500 residues long: MTIFDNYEVWFVIGSQHLYGPETLRQVTQHAEHVVNALNTEAKLPCKLVLKPLGTTPDEITAICRDANYDDRCAGLVVWLHTFSPAKMWINGLTMLNKPLLQFHTQFNAALPWDSIDMDFMNLNQTAHGGREFSFIGARMRQQHAVVTGHWQDKQAHERIGSWMRQAVSKQDTRHLKVCRFGDNMREVAVTDGDKVAAQIKFGFSVNTWAVGDLVQVVNSISDGDVNALVDEYESCYTMTPATQIHGEKRQNVLEAARIELGMKRFLEQGGFHAFTTTFEDLHGLKQLPGLAVQRLMQQGYGFAGEGDWKTAALLRIMKVMSTGLQGGTSFMEDYTYHFEKGNDLVLGSHMLEVCPSIAAEEKPILDVQHLGIGGKDDPARLIFNTQTGPAIVASLIDLGDRYRLLVNCIDTVKTPHSLPKLPVANALWKAQPDLPTASEAWILAGGAHHTVFSHALNLNDMRQFAEMHDIEITVIDNDTRLPAFKDALRWNEVYYGFRR.

Mn(2+) contacts are provided by glutamate 306, glutamate 333, histidine 350, and histidine 450.

The protein belongs to the arabinose isomerase family. Homohexamer. Requires Mn(2+) as cofactor.

It carries out the reaction beta-L-arabinopyranose = L-ribulose. The protein operates within carbohydrate degradation; L-arabinose degradation via L-ribulose; D-xylulose 5-phosphate from L-arabinose (bacterial route): step 1/3. In terms of biological role, catalyzes the conversion of L-arabinose to L-ribulose. The chain is L-arabinose isomerase from Shigella dysenteriae serotype 1 (strain Sd197).